Reading from the N-terminus, the 71-residue chain is Non-structural protein 3x (71 aa).

The polypeptide is Non-structural protein 3x (Canis lupus familiaris (Dog)).